Here is a 408-residue protein sequence, read N- to C-terminus: Putative transporter AmpG 2 (408 aa).

Transmembrane regions (helical) follow at residues 11–31, 49–69, 84–104, 110–130, 154–174, 177–197, 224–244, 261–281, 294–311, 353–373, and 382–402; these read IFNI…YLLT, IGLF…GPLL, YCLV…TSFN, IPFV…DMLI, FRIG…IISW, VYRT…FYPL, CIVI…LSIM, VGYK…GGFL, VLIY…LYFL, IALI…ISGY, and YFFI…LYLP.

It belongs to the major facilitator superfamily.

It is found in the cell inner membrane. This chain is Putative transporter AmpG 2 (ampG2), found in Rickettsia prowazekii (strain Madrid E).